Consider the following 253-residue polypeptide: 5'-nucleotidase SurE (253 aa).

Residues Asp8, Asp9, Ser39, and Asn95 each coordinate a divalent metal cation.

Belongs to the SurE nucleotidase family. A divalent metal cation serves as cofactor.

The protein resides in the cytoplasm. It catalyses the reaction a ribonucleoside 5'-phosphate + H2O = a ribonucleoside + phosphate. In terms of biological role, nucleotidase that shows phosphatase activity on nucleoside 5'-monophosphates. This is 5'-nucleotidase SurE from Chloroflexus aggregans (strain MD-66 / DSM 9485).